The following is a 26-amino-acid chain: Hemocyanin subunit 5 (26 aa).

It belongs to the tyrosinase family. Hemocyanin subfamily. Hemolymph.

The protein resides in the secreted. The protein localises to the extracellular space. Hemocyanins are copper-containing oxygen carriers occurring freely dissolved in the hemolymph of many mollusks and arthropods. The protein is Hemocyanin subunit 5 of Maja squinado (Mediterranean spider crab).